The primary structure comprises 461 residues: Gustatory and pheromone receptor 32a (461 aa).

Residues 1-100 (MSPNTWVIEM…YSFFVRGVVH (100 aa)) are Cytoplasmic-facing. The chain crosses the membrane as a helical span at residues 101-121 (ALTIFNVYSLFTPISAQLFFS). Over 122–127 (YRETDN) the chain is Extracellular. A helical transmembrane segment spans residues 128–148 (VNQWIELLLCILTYTLTVFVC). Topologically, residues 149–180 (AHNTTSMLRIMNEILQLDEEVRRQFGANLSQN) are cytoplasmic. Residues 181 to 201 (FGFLVKFLVGITACQAYIIVL) traverse the membrane as a helical segment. Residues 202–214 (KIYAVQGEITPTS) lie on the Extracellular side of the membrane. A helical transmembrane segment spans residues 215-235 (YILLAFYGIQNGLTATYIVFA). The Cytoplasmic segment spans residues 236 to 317 (SALLRIVYIR…YKGINDCCNL (82 aa)). Residues 318–338 (ILVSFLGYSFYTVTTNCYNLF) traverse the membrane as a helical segment. Topologically, residues 339–348 (VQITGKGMVS) are extracellular. A helical transmembrane segment spans residues 349–369 (PNILQWCFAWLCLHVSLLALL). Residues 370–414 (SRSCGLTTTEANATSQILARVYAKSKEYQNIIDKFLTKSIKQEVQ) are Cytoplasmic-facing. A helical transmembrane segment spans residues 415 to 435 (FTAYGFFAIDNSTLFKIFSAV). At 436–461 (TTYLVILIQFKQLEDSKVEDPVPEQT) the chain is on the extracellular side.

Belongs to the insect chemoreceptor superfamily. Gustatory receptor (GR) family. Gr21a subfamily. In terms of tissue distribution, expressed in the adult labellar chemosensory neurons. Expressed in tarsal neurons for male-male courtship suppression. In larvae, is expressed in neurons of the terminal external chemosensory organ, and the dorsal and posterior external chemosensory organs.

Its subcellular location is the cell membrane. In terms of biological role, gustatory receptor which mediates acceptance or avoidance behavior, depending on its substrates. Required for the response to N,N-Diethyl-meta-toluamide (DEET), the most widely used insect repellent worldwide. Functions as a pheromone receptor for a male inhibitory pheromone and promotes male-male aggression and suppresses male-male courtship. Also promotes preferentially virgin females courting over mated females. The chain is Gustatory and pheromone receptor 32a (Gr32a) from Drosophila melanogaster (Fruit fly).